A 365-amino-acid chain; its full sequence is Synapse-associated protein 1 (365 aa).

Residues 1-65 (MFGGLSSWLG…QPPTEDPQFL (65 aa)) are disordered. Over residues 52–62 (EQQQQPPTEDP) the composition is skewed to low complexity. Residues 172-224 (VQFNFDFDQMYPVALVMLQEDELLSKMRFALVPKLVKEEVFWRNYFYRISLIK) form the BSD domain. The interval 237 to 259 (QASGKEEKSSNRDDNLPLTEAVR) is disordered. Residues 240-251 (GKEEKSSNRDDN) show a composition bias toward basic and acidic residues. T262 is subject to Phosphothreonine. A phosphoserine mark is found at S283, S298, and S327. The segment at 344-365 (VAESEKRDENWDKEIEKMLQES) is disordered. Positions 346–365 (ESEKRDENWDKEIEKMLQES) are enriched in basic and acidic residues.

In terms of assembly, interacts (via phosphorylated form and BSD domain) with AKT1; this interaction is enhanced in a mTORC2-mediated manner in response to epidermal growth factor (EGF) stimulation and activates AKT1. Phosphorylated. Phosphorylation increases in a mTORC2-mediated manner in response to epidermal growth factor (EGF) stimulation. As to expression, expressed in the liver, kidney, skeletal muscle and in white and brown adipose tissues. Expressed in the cortex, cerebellum, thalamus, hippocampus, braistem, olfactory bulb, spinal cord and striatum of the brain. Expressed in most neuropil regions containing glutamatergic synaptic terminals. Expressed in the CA1, CA2 and CA3 perikarya of the hippocampus. Expressed in neurons and Purkinje cells (at the protein level).

The protein localises to the cytoplasm. It localises to the perinuclear region. The protein resides in the golgi apparatus. It is found in the perikaryon. Its subcellular location is the cell projection. The protein localises to the axon. It localises to the dendrite. The protein resides in the growth cone. It is found in the presynaptic cell membrane. Its subcellular location is the postsynaptic cell membrane. The protein localises to the membrane. Plays a role in adipocyte differentiation by promoting mTORC2-mediated phosphorylation of AKT1 at 'Ser-473' after growth factor stimulation. In Mus musculus (Mouse), this protein is Synapse-associated protein 1.